The primary structure comprises 552 residues: Hydroxylamine reductase (552 aa).

[2Fe-2S] cluster is bound by residues Cys-3, Cys-6, Cys-18, and Cys-25. Hybrid [4Fe-2O-2S] cluster-binding residues include His-250, Glu-274, Cys-318, Cys-406, Cys-434, Cys-459, Glu-493, and Lys-495. Cys-406 bears the Cysteine persulfide mark.

Belongs to the HCP family. Requires [2Fe-2S] cluster as cofactor. Hybrid [4Fe-2O-2S] cluster serves as cofactor.

It is found in the cytoplasm. The enzyme catalyses A + NH4(+) + H2O = hydroxylamine + AH2 + H(+). Catalyzes the reduction of hydroxylamine to form NH(3) and H(2)O. This Shewanella sediminis (strain HAW-EB3) protein is Hydroxylamine reductase.